Consider the following 174-residue polypeptide: NADH-quinone oxidoreductase subunit B 1 (174 aa).

Residues Cys-38, Cys-39, Cys-104, and Cys-133 each coordinate [4Fe-4S] cluster.

Belongs to the complex I 20 kDa subunit family. NDH-1 is composed of 14 different subunits. Subunits NuoB, C, D, E, F, and G constitute the peripheral sector of the complex. It depends on [4Fe-4S] cluster as a cofactor.

Its subcellular location is the cell membrane. It carries out the reaction a quinone + NADH + 5 H(+)(in) = a quinol + NAD(+) + 4 H(+)(out). NDH-1 shuttles electrons from NADH, via FMN and iron-sulfur (Fe-S) centers, to quinones in the respiratory chain. The immediate electron acceptor for the enzyme in this species is believed to be ubiquinone. Couples the redox reaction to proton translocation (for every two electrons transferred, four hydrogen ions are translocated across the cytoplasmic membrane), and thus conserves the redox energy in a proton gradient. The sequence is that of NADH-quinone oxidoreductase subunit B 1 from Chloroflexus aggregans (strain MD-66 / DSM 9485).